A 144-amino-acid chain; its full sequence is Maximins 11/H1 (144 aa).

Residues 1–18 form the signal peptide; the sequence is MNFKYIVAVSFLIASAYA. Residues 19–43 constitute a propeptide that is removed on maturation; sequence RSEENDEQSLSQRDVLEEESLREIR. An Asparagine amide modification is found at asparagine 70. The propeptide occupies 74 to 123; it reads TAEDHEVMKRLEAVMRDLDSLDYPEEASERETRGFNQEEIANLFTKKEKR. Position 143 is a leucine amide (leucine 143).

The protein belongs to the bombinin family. Expressed by the skin glands.

The protein resides in the secreted. Maximin-11 shows antimicrobial activity against bacteria and against the fungus C.albicans. It has little hemolytic activity. Functionally, maximin-H1 shows antibacterial activity against both Gram-positive and Gram-negative bacteria. It also shows antimicrobial activity against the fungus C.albicans. Shows strong hemolytic activity. In Bombina maxima (Giant fire-bellied toad), this protein is Maximins 11/H1.